The chain runs to 140 residues: MDSRIPYDDYPVVFLPAYENPPAWIPPHERVHHPDYNNELTQFLPRTITLKKPPGAQLGFNIRGGKASQLGIFISKVIPDSDAHRAGLQEGDQVLAVNDVDFQDIEHSKAVEILKTAREISMRVRFFPYNYHRQKERTVH.

The PDZ domain maps to 47 to 129; that stretch reads TITLKKPPGA…ISMRVRFFPY (83 aa).

In terms of assembly, interacts with ATP2B1, ATP2B2, ATP2B3, ATP2B4 and ATP7A. Interacts with PLEKHA7 (via WW domains) at zonula adherens; this interaction is essential for the interaction between PLEKHA7 and the ADAM10-binding protein TSPAN33. Interacts with SLC5A6. In terms of tissue distribution, widely expressed (at protein level).

It localises to the secreted. The protein resides in the cytoplasm. The protein localises to the cell junction. Its subcellular location is the adherens junction. It is found in the cell membrane. Functionally, mediates docking of ADAM10 to zonula adherens by interacting with PLEKHA7 which is required for PLEKHA7 to interact with the ADAM10-binding protein TSPAN33. This chain is PDZ domain-containing protein 11 (PDZD11), found in Homo sapiens (Human).